Here is an 86-residue protein sequence, read N- to C-terminus: uncharacterized protein (86 aa).

A helical transmembrane segment spans residues 4 to 24 (LFFTLIAFVAIILLMSIGFII).

The protein localises to the membrane. This is an uncharacterized protein from Haemophilus influenzae (strain ATCC 51907 / DSM 11121 / KW20 / Rd).